A 556-amino-acid chain; its full sequence is Formate--tetrahydrofolate ligase (556 aa).

65 to 72 (TPAGEGKS) is an ATP binding site.

The protein belongs to the formate--tetrahydrofolate ligase family.

It catalyses the reaction (6S)-5,6,7,8-tetrahydrofolate + formate + ATP = (6R)-10-formyltetrahydrofolate + ADP + phosphate. Its pathway is one-carbon metabolism; tetrahydrofolate interconversion. The chain is Formate--tetrahydrofolate ligase from Streptococcus pneumoniae (strain 70585).